A 303-amino-acid polypeptide reads, in one-letter code: N-acetyl-D-glucosamine kinase (303 aa).

Residues 4 to 11 (GFDVGGTK) and 133 to 140 (GFGGGLIY) each bind ATP. Zn(2+) is bound by residues His-157, Cys-177, Cys-179, and Cys-184.

The protein belongs to the ROK (NagC/XylR) family. NagK subfamily.

It carries out the reaction N-acetyl-D-glucosamine + ATP = N-acetyl-D-glucosamine 6-phosphate + ADP + H(+). The protein operates within cell wall biogenesis; peptidoglycan recycling. In terms of biological role, catalyzes the phosphorylation of N-acetyl-D-glucosamine (GlcNAc) derived from cell-wall degradation, yielding GlcNAc-6-P. The sequence is that of N-acetyl-D-glucosamine kinase from Vibrio vulnificus (strain CMCP6).